The following is a 166-amino-acid chain: MAHIEKQAGELQEKLIAVNRVSKTVKGGRIFSFTALTVVGDGNGRVGFGYGKAREVPAAIQKAMEKARRNMINVALNHGTLQHPVKGVHTGSRVFMQPASEGTGIIAGGAMRAVLEVAGVHNVLAKAYGSTNPINVVRATIDGLENMNSPEMVAAKRGKSVEEILG.

One can recognise an S5 DRBM domain in the interval 11-74 (LQEKLIAVNR…EKARRNMINV (64 aa)).

Belongs to the universal ribosomal protein uS5 family. In terms of assembly, part of the 30S ribosomal subunit. Contacts proteins S4 and S8.

In terms of biological role, with S4 and S12 plays an important role in translational accuracy. Its function is as follows. Located at the back of the 30S subunit body where it stabilizes the conformation of the head with respect to the body. This Enterobacter sp. (strain 638) protein is Small ribosomal subunit protein uS5.